Reading from the N-terminus, the 132-residue chain is Phosphomevalonate dehydratase small subunit (132 aa).

Residue S61 is the Proton acceptor of the active site.

It belongs to the AcnX type II small subunit family. Heterodimer composed of a large subunit (PMDh-L) and a small subunit (PMDh-S).

The enzyme catalyses (R)-5-phosphomevalonate = (2E)-3-methyl-5-phosphooxypent-2-enoate + H2O. The protein operates within isoprenoid biosynthesis; isopentenyl diphosphate biosynthesis via mevalonate pathway. In terms of biological role, component of a hydro-lyase that catalyzes the dehydration of mevalonate 5-phosphate (MVA5P) to form trans-anhydromevalonate 5-phosphate (tAHMP). Involved in the archaeal mevalonate (MVA) pathway, which provides fundamental precursors for isoprenoid biosynthesis, such as isopentenyl diphosphate (IPP) and dimethylallyl diphosphate (DMAPP). This is Phosphomevalonate dehydratase small subunit from Archaeoglobus fulgidus (strain ATCC 49558 / DSM 4304 / JCM 9628 / NBRC 100126 / VC-16).